A 289-amino-acid polypeptide reads, in one-letter code: CBY1-interacting BAR domain-containing protein 1 (289 aa).

Residues 1-47 constitute a mitochondrion transit peptide; that stretch reads MMRRTLENRNAQTKQLQTAVSNVEKHFGELCQIFAAYVRKTARLRDK. The tract at residues 10-220 is BAR-like; it reads NAQTKQLQTA…NIDEDEDLEV (211 aa). Positions 107 to 178 form a coiled coil; it reads KMKRDDLKAT…INNFERQKMK (72 aa). The interval 265 to 289 is disordered; that stretch reads LRKDQQAEDDEDDELDVTEEENFLK. Residues 271-289 are compositionally biased toward acidic residues; sequence AEDDEDDELDVTEEENFLK.

It belongs to the CIBAR family. Homodimer (via BAR-like domain). Heterodimer with FAM92B (via BAR-like domains). Interacts (via BAR-like domain) with CBY1; this interaction is required for targeting FAM92A to centriole and cilium basal body. Interacts (via BAR-like domain) with CBY3; both proteins form a ninefold symmetric structure at the flagellar base; are recruited to the annulus in a mutually dependent manner and regulate annulus positionning.

Its subcellular location is the cytoplasm. It is found in the cytoskeleton. It localises to the microtubule organizing center. The protein resides in the centrosome. The protein localises to the centriole. Its subcellular location is the cilium basal body. It is found in the cell projection. It localises to the cilium. The protein resides in the nucleus. The protein localises to the mitochondrion inner membrane. Its subcellular location is the flagellum. Its function is as follows. Plays a critical role in regulating mitochondrial ultrastructure and function by maintaining the integrity of mitochondrial morphology, particularly the organization of cristae. Preferentially binds to negatively charged phospholipids like cardiolipin and phosphatidylinositol 4,5-bisphosphate enhancing its interaction with mitochondrial membranes. Induces membrane curvature and tubulation, which are critical for maintaining mitochondrial ultrastructure and the organization of cristae. Plays a crucial role in ciliogenesis. May play a role in limb development through its role in ciliogenesis. Plays a key role in the correct positioning of the annulus, a septin-based ring structure in the sperm flagellum, serving both as a physical barrier and a membrane diffusion barrier that separates the midpiece (MP) from the principal piece (PP). This positioning is essential for proper sperm motility and function. Interacts with CBY3 to form a complex which localizes to the curved membrane region of the flagellar pocket. By doing so, may provide stability and rigidity to the periannular membrane to prevent membrane deformation. This function is crucial for halting annulus migration at the proximal end of the fibrous sheath-containing PP. The polypeptide is CBY1-interacting BAR domain-containing protein 1 (Homo sapiens (Human)).